The primary structure comprises 575 residues: TOX high mobility group box family member 3 (575 aa).

Disordered regions lie at residues 189 to 258 (LGGA…QKPV) and 516 to 575 (QQLQ…VSIF). The span at 195–214 (SHTSPSPPASKSATPSPSSS) shows a compositional bias: low complexity. The segment covering 222-238 (DANRAIGEKRTAPDSGK) has biased composition (basic and acidic residues). The segment covering 239 to 249 (KPKTPKKKKKK) has biased composition (basic residues). Positions 254-322 (PQKPVSAYAL…EYLKALAAYR (69 aa)) form a DNA-binding region, HMG box. The segment covering 516–526 (QQLQHMQHQSQ) has biased composition (low complexity). The segment covering 527–541 (PSPRQHSPVTSQITS) has biased composition (polar residues). Residues 548–575 (SPQPASQQHQPQIQSQTQTQVLPQVSIF) show a composition bias toward low complexity.

Homodimer. Interacts (via HGM box) with CITED1 (via C-terminus); the interaction increases estrogen-response element (ERE)-dependent transcription and protection against cell death. Interacts with CREB1 (phosphorylated form). Interacts with CREB1; the interaction is not depolarization dependent. Interacts with CREBBP (via C-terminus).

The protein resides in the nucleus. In terms of biological role, transcriptional coactivator of the p300/CBP-mediated transcription complex. Activates transactivation through cAMP response element (CRE) sites. Protects against cell death by inducing antiapoptotic and repressing pro-apoptotic transcripts. Stimulates transcription from the estrogen-responsive or BCL-2 promoters. Required for depolarization-induced transcription activation of the C-FOS promoter in neurons. Associates with chromatin to the estrogen-responsive C3 promoter region. This chain is TOX high mobility group box family member 3 (Tox3), found in Mus musculus (Mouse).